We begin with the raw amino-acid sequence, 282 residues long: MAVRLSLPAPAKLNLFLHILGRRADGYHELQTLFQFLDHGDELHFETREDGQVRLHTEIAGVPHDGNLIVRAARVLQEASGSTQGVDIWLDKRLPMGGGIGGGSSDAATTLLALNHLWNLGWDEDRIAALGLRLGADVPVFTRGRAAFAEGVGEKLTPVDIPEPWYLVVVPQVLVSTAEIFSDPLLTRDSPAIKVRTVLEGDSRNDCQPVVERRYPEVRNALILLNKFVSARLTGTGGCVFGSFPNKAEADKVSALLPDHLQRFVAKGSNVSMLHRKLETLV.

Lysine 12 is an active-site residue. 95-105 contributes to the ATP binding site; that stretch reads PMGGGIGGGSS. Aspartate 137 is an active-site residue.

It belongs to the GHMP kinase family. IspE subfamily.

The catalysed reaction is 4-CDP-2-C-methyl-D-erythritol + ATP = 4-CDP-2-C-methyl-D-erythritol 2-phosphate + ADP + H(+). Its pathway is isoprenoid biosynthesis; isopentenyl diphosphate biosynthesis via DXP pathway; isopentenyl diphosphate from 1-deoxy-D-xylulose 5-phosphate: step 3/6. Functionally, catalyzes the phosphorylation of the position 2 hydroxy group of 4-diphosphocytidyl-2C-methyl-D-erythritol. In Pseudomonas paraeruginosa (strain DSM 24068 / PA7) (Pseudomonas aeruginosa (strain PA7)), this protein is 4-diphosphocytidyl-2-C-methyl-D-erythritol kinase.